The sequence spans 286 residues: Large ribosomal subunit protein uL4m (286 aa).

The N-terminal 26 residues, 1-26, are a transit peptide targeting the mitochondrion; it reads MTIKRNLVKTLQSIRYQATTATAHAE. A disordered region spans residues 85 to 132; sequence RRVGASNPPGRSENGFSRRKLMPQKGSGRARVGDANSPTRHNGGRALA.

Belongs to the universal ribosomal protein uL4 family. Component of the mitochondrial large ribosomal subunit (mt-LSU). Mature yeast 74S mitochondrial ribosomes consist of a small (37S) and a large (54S) subunit. The 37S small subunit contains a 15S ribosomal RNA (15S mt-rRNA) and 34 different proteins. The 54S large subunit contains a 21S rRNA (21S mt-rRNA) and 46 different proteins.

It localises to the mitochondrion. In terms of biological role, component of the mitochondrial ribosome (mitoribosome), a dedicated translation machinery responsible for the synthesis of mitochondrial genome-encoded proteins, including at least some of the essential transmembrane subunits of the mitochondrial respiratory chain. The mitoribosomes are attached to the mitochondrial inner membrane and translation products are cotranslationally integrated into the membrane. This Saccharomyces cerevisiae (strain ATCC 204508 / S288c) (Baker's yeast) protein is Large ribosomal subunit protein uL4m (YML6).